We begin with the raw amino-acid sequence, 295 residues long: Protoheme IX farnesyltransferase (295 aa).

7 helical membrane-spanning segments follow: residues 43–63 (PIQL…VAAL), 92–112 (SAFV…YALV), 114–134 (PLAA…YTPA), 140–160 (WSTE…WSAG), 166–186 (ALGW…FMAV), 231–251 (LLWG…GLWF), and 272–292 (FFAS…DRLF).

It belongs to the UbiA prenyltransferase family. Protoheme IX farnesyltransferase subfamily.

The protein localises to the cell inner membrane. It catalyses the reaction heme b + (2E,6E)-farnesyl diphosphate + H2O = Fe(II)-heme o + diphosphate. Its pathway is porphyrin-containing compound metabolism; heme O biosynthesis; heme O from protoheme: step 1/1. In terms of biological role, converts heme B (protoheme IX) to heme O by substitution of the vinyl group on carbon 2 of heme B porphyrin ring with a hydroxyethyl farnesyl side group. The polypeptide is Protoheme IX farnesyltransferase (Opitutus terrae (strain DSM 11246 / JCM 15787 / PB90-1)).